Reading from the N-terminus, the 1906-residue chain is Myosin light chain kinase, smooth muscle (1906 aa).

2 Ig-like C2-type domains span residues Pro-28 to Thr-117 and Pro-156 to Thr-244. Disordered regions lie at residues Ser-127 to Lys-157 and Glu-309 to Ser-453. A compositionally biased stretch (basic and acidic residues) spans Glu-309 to Lys-321. 2 stretches are compositionally biased toward polar residues: residues Leu-345–Leu-354 and Pro-384–Pro-402. The segment covering Arg-403–Pro-424 has biased composition (basic and acidic residues). Ig-like C2-type domains follow at residues Pro-429 to Thr-517, Pro-521 to Thr-613, Pro-637 to Thr-725, and Pro-735 to Ser-830. The IIA-1 repeat unit spans residues Val-660–Glu-676. Residues Val-660–Pro-1833 form a 4 X repeats, motif IIA region. One copy of the IIB-1 repeat lies at Ser-693–Thr-708. Positions Ser-693–Thr-1866 are 5 X repeats, motif IIB. An IIA-2 repeat occupies Ile-758–Glu-774. One copy of the IIB-2 repeat lies at Thr-791 to Ile-807. 2 disordered regions span residues Arg-831–Val-881 and Pro-947–Phe-1086. Composition is skewed to basic and acidic residues over residues Glu-833 to Gly-850 and Ser-867 to Val-881. One copy of the III-1 repeat lies at Ala-970–Lys-987. Positions Ala-970–Gln-1226 are 4 X repeats, motif III. Pro residues predominate over residues Thr-977–Pro-988. The III-2 repeat unit spans residues Ala-999–Asn-1016. A compositionally biased stretch (basic and acidic residues) spans Val-1039–His-1051. An III-3 repeat occupies Ile-1061 to Pro-1078. Ig-like C2-type domains lie at Pro-1084–Leu-1172 and Pro-1225–Thr-1313. One copy of the IIA-3 repeat lies at Ile-1107–Ala-1123. One copy of the IIB-3 repeat lies at Ser-1140–Cys-1156. Residues Lys-1180–Ile-1227 are disordered. The stretch at Val-1209–Gln-1226 is one III-4 repeat. The IIB-4 repeat unit spans residues Lys-1281–Leu-1297. The tract at residues Lys-1317 to Lys-1364 is motif IA. Residues Pro-1321 to Lys-1414 form the Fibronectin type-III domain. A motif IB region spans residues Arg-1385–Pro-1402. The tract at residues Lys-1414 to Glu-1433 is disordered. Positions Gln-1415 to Lys-1432 are enriched in acidic residues. The Protein kinase domain occupies Tyr-1453–Leu-1708. ATP-binding positions include Leu-1459 to Val-1467 and Lys-1482. Asp-1574 functions as the Proton acceptor in the catalytic mechanism. Residues Thr-1700 to Gly-1763 form a calmodulin-binding region. The segment at Glu-1716–Tyr-1728 is calmodulin autoinhibition (AM13) region. Residues Ala-1730 to Ser-1749 form a calmodulin recognition (RS20) region region. The residue at position 1762 (Ser-1762) is a Phosphoserine; by PKG. Ser-1768 is subject to Phosphoserine; by MAPK. One can recognise an Ig-like C2-type 9 domain in the interval Pro-1794–Glu-1885. The IIA-4 repeat unit spans residues Ile-1817–Pro-1833. The IIB-5 repeat unit spans residues Ser-1851–Thr-1866. Residues Glu-1885–Glu-1906 are disordered. The span at Gly-1893 to Glu-1906 shows a compositional bias: acidic residues.

It belongs to the protein kinase superfamily. CAMK Ser/Thr protein kinase family. As to quaternary structure, all isoforms including Telokin bind calmodulin. Requires Mg(2+) as cofactor. The cofactor is Ca(2+). In terms of processing, the C-terminus is deglutamylated, leading to the formation of Myosin light chain kinase, smooth muscle, deglutamylated form. The C-terminus is variable, with one to five C-terminal glutamyl residues being removed producing five forms differring in their number of C-terminal glutamyl residues. Acetylated. Post-translationally, phosphorylation of telokin by PKG has no significant effect on its myosin binding activity, but promotes translocation to the membrane. Isoform telokin is expressed in gizzard, heart, lung, intestine, and skeletal muscle although the levels of the expression in the latter were much less than that in the gizzard.

The protein resides in the cytoplasm. It is found in the cytosol. It localises to the membrane. The enzyme catalyses L-seryl-[myosin light chain] + ATP = O-phospho-L-seryl-[myosin light chain] + ADP + H(+). It catalyses the reaction L-threonyl-[myosin light chain] + ATP = O-phospho-L-threonyl-[myosin light chain] + ADP + H(+). Activated by phosphorylation on Tyr-478. Isoforms which lack this tyrosine residue are not regulated in this way. All catalytically active isoforms require binding to calcium and calmodulin for activation. Phosphorylates a specific serine in the N-terminus of a myosin light chain, which leads to the formation of calmodulin/MLCK signal transduction complexes which allow selective transduction of calcium signals. This chain is Myosin light chain kinase, smooth muscle (Mylk), found in Gallus gallus (Chicken).